A 195-amino-acid polypeptide reads, in one-letter code: MATDSALINLTHHFLIAMPGLEDEAFAKSVVYMCEHSDRGALGLVINKPSDINLKNLFDKVELPLRRDDLTEAPVFQGGPVQTERGFVLHESMMPGSESVYASTMTIPGGLEMTTSKDVLEALSTGAGPRKVFVSLGYSAWGEGQLESEISDNSWLTVPADVAVIFDTPVEQRYDKALMLLGLQSWMLSPDAGHA.

It belongs to the UPF0301 (AlgH) family.

The polypeptide is UPF0301 protein Bpro_1142 (Polaromonas sp. (strain JS666 / ATCC BAA-500)).